The chain runs to 178 residues: 2-C-methyl-D-erythritol 2,4-cyclodiphosphate synthase (178 aa).

A divalent metal cation-binding residues include aspartate 24, histidine 26, and histidine 61. 24 to 26 (DSH) lines the 4-CDP-2-C-methyl-D-erythritol 2-phosphate pocket. Residue 150-153 (TSGE) coordinates 4-CDP-2-C-methyl-D-erythritol 2-phosphate.

The protein belongs to the IspF family. Homotrimer. A divalent metal cation is required as a cofactor.

The enzyme catalyses 4-CDP-2-C-methyl-D-erythritol 2-phosphate = 2-C-methyl-D-erythritol 2,4-cyclic diphosphate + CMP. It participates in isoprenoid biosynthesis; isopentenyl diphosphate biosynthesis via DXP pathway; isopentenyl diphosphate from 1-deoxy-D-xylulose 5-phosphate: step 4/6. Involved in the biosynthesis of isopentenyl diphosphate (IPP) and dimethylallyl diphosphate (DMAPP), two major building blocks of isoprenoid compounds. Catalyzes the conversion of 4-diphosphocytidyl-2-C-methyl-D-erythritol 2-phosphate (CDP-ME2P) to 2-C-methyl-D-erythritol 2,4-cyclodiphosphate (ME-CPP) with a corresponding release of cytidine 5-monophosphate (CMP). The polypeptide is 2-C-methyl-D-erythritol 2,4-cyclodiphosphate synthase (Chlamydia muridarum (strain MoPn / Nigg)).